A 526-amino-acid chain; its full sequence is Peptide chain release factor 3 (526 aa).

The tr-type G domain occupies 8–277 (GKRRTFAIIS…GLTDWAPAPQ (270 aa)). Residues 17-24 (SHPDAGKT), 85-89 (DTPGH), and 139-142 (NKLD) contribute to the GTP site.

It belongs to the TRAFAC class translation factor GTPase superfamily. Classic translation factor GTPase family. PrfC subfamily.

It is found in the cytoplasm. Functionally, increases the formation of ribosomal termination complexes and stimulates activities of RF-1 and RF-2. It binds guanine nucleotides and has strong preference for UGA stop codons. It may interact directly with the ribosome. The stimulation of RF-1 and RF-2 is significantly reduced by GTP and GDP, but not by GMP. This Aliivibrio fischeri (strain MJ11) (Vibrio fischeri) protein is Peptide chain release factor 3.